We begin with the raw amino-acid sequence, 102 residues long: Defensin (102 aa).

The N-terminal stretch at 1-25 is a signal peptide; sequence MKCATIVCTIAVVLAATLLNGSVQA. Residues 26 to 62 constitute a propeptide that is removed on maturation; sequence APQEEAALSGGANLNTLLDELPEETHHAALENYRAKR. 3 cysteine pairs are disulfide-bonded: Cys-65–Cys-92, Cys-78–Cys-98, and Cys-82–Cys-100.

This sequence belongs to the invertebrate defensin family. Type 1 subfamily.

Its subcellular location is the secreted. Responsible for the anti Gram-positive activity of immune hemolymph. This chain is Defensin (Def1), found in Anopheles gambiae (African malaria mosquito).